The following is a 238-amino-acid chain: Glyceraldehyde 3-phosphate phosphatase (238 aa).

It belongs to the HAD-like hydrolase superfamily. The cofactor is Mg(2+).

Catalyzes the dephosphorylation of D,L-glyceraldehyde 3-phosphate in vitro. The chain is Glyceraldehyde 3-phosphate phosphatase from Pyrococcus abyssi (strain GE5 / Orsay).